The primary structure comprises 119 residues: Large ribosomal subunit protein bL20 (119 aa).

This sequence belongs to the bacterial ribosomal protein bL20 family.

Binds directly to 23S ribosomal RNA and is necessary for the in vitro assembly process of the 50S ribosomal subunit. It is not involved in the protein synthesizing functions of that subunit. The sequence is that of Large ribosomal subunit protein bL20 from Legionella pneumophila (strain Paris).